The sequence spans 410 residues: Metacaspase-1 (410 aa).

The interval 1–94 (MFPGSGRQTY…RQSGAMNDVS (94 aa)) is disordered. 2 stretches are compositionally biased toward low complexity: residues 21–47 (APQY…YNGP) and 55–64 (NYNYGHYGPP). The span at 65 to 75 (QGQGQGYGQGG) shows a compositional bias: gly residues. The span at 80 to 94 (MYNNNRQSGAMNDVS) shows a compositional bias: polar residues. Active-site residues include H200 and C256.

It belongs to the peptidase C14B family.

In terms of biological role, involved in cell death (apoptosis). This Meyerozyma guilliermondii (strain ATCC 6260 / CBS 566 / DSM 6381 / JCM 1539 / NBRC 10279 / NRRL Y-324) (Yeast) protein is Metacaspase-1 (MCA1).